The primary structure comprises 663 residues: Protein THEMIS2 (663 aa).

2 CABIT regions span residues 2–237 (EPVP…TASS) and 238–515 (QHIH…EAEG). The tract at residues 545-663 (ASESQAPPPR…DMDDHDYEEI (119 aa)) is disordered. Residues 559–577 (QGINKKQQNIQSCKESSVK) are compositionally biased toward polar residues. Position 596 is a phosphothreonine (Thr-596). The span at 621–641 (NPQTQNSVLSMKPKTSSSLGK) shows a compositional bias: polar residues. A compositionally biased stretch (acidic residues) spans 653–663 (PDMDDHDYEEI). Tyr-660 is subject to Phosphotyrosine.

This sequence belongs to the themis family. Interacts with VAV1. Interacts with LAT. Interacts constitutively with GRB2, LYN and PLCG2; these interactions increase the activation of PLCG2 and its downstream pathways following B cell receptor stimulation. Phosphorylation at Tyr-660 is induced by LPS. Phosphorylated by Src kinases (Lck or Fyn) following BCR engagement. In terms of tissue distribution, expressed in both developing and mature B-cells with high expression in immature, follicular and B1 B cells. Also expressed in macrophages and dendritic cells. Down-regulated in splenocytes of mice developing arthritis in a collagen-induced model, not in those of mice failing to develop the disease. Transiently down-regulated in splenocytes of mice infected with influenza virus.

It is found in the nucleus. Its subcellular location is the cytoplasm. Its function is as follows. May constitute a control point in macrophage inflammatory response, promoting LPS-induced TLR4-mediated TNF production. Determines the threshold for activation of B cells by low-affinity and low-avidity ligands via PLCG2 activation and its downstream pathways. This is Protein THEMIS2 from Mus musculus (Mouse).